The sequence spans 178 residues: UPF0215 protein STK_03040 (178 aa).

Belongs to the UPF0215 family.

The sequence is that of UPF0215 protein STK_03040 from Sulfurisphaera tokodaii (strain DSM 16993 / JCM 10545 / NBRC 100140 / 7) (Sulfolobus tokodaii).